The chain runs to 111 residues: uncharacterized protein (111 aa).

Residues 12 to 34 are disordered; sequence AWCPSRPPASAPSAPQEAARRGD. Residues 71-76 form a required for interaction with PPP3CA region; it reads PNIIIT. Residues Thr-79 and Thr-81 each carry the phosphothreonine modification.

Interacts (via PxIxIT motif, when phosphorylated on Thr-79) with PPP3CA.

This is an uncharacterized protein from Mus musculus (Mouse).